A 266-amino-acid chain; its full sequence is Streptomycin 3''-kinase (266 aa).

The active-site Proton acceptor is the Asp154.

The protein belongs to the aminoglycoside phosphotransferase family.

It carries out the reaction streptomycin + ATP = streptomycin 3''-phosphate + ADP + H(+). The aminoglycoside phosphotransferases achieve inactivation of their antibiotic substrates by phosphorylation. This Klebsiella pneumoniae protein is Streptomycin 3''-kinase (str).